Reading from the N-terminus, the 236-residue chain is Phosphoribosylaminoimidazole-succinocarboxamide synthase (236 aa).

Belongs to the SAICAR synthetase family.

It catalyses the reaction 5-amino-1-(5-phospho-D-ribosyl)imidazole-4-carboxylate + L-aspartate + ATP = (2S)-2-[5-amino-1-(5-phospho-beta-D-ribosyl)imidazole-4-carboxamido]succinate + ADP + phosphate + 2 H(+). Its pathway is purine metabolism; IMP biosynthesis via de novo pathway; 5-amino-1-(5-phospho-D-ribosyl)imidazole-4-carboxamide from 5-amino-1-(5-phospho-D-ribosyl)imidazole-4-carboxylate: step 1/2. The polypeptide is Phosphoribosylaminoimidazole-succinocarboxamide synthase (purC) (Rickettsia prowazekii (strain Madrid E)).